We begin with the raw amino-acid sequence, 265 residues long: Ribosomal RNA small subunit methyltransferase A (265 aa).

6 residues coordinate S-adenosyl-L-methionine: H13, L15, G40, E61, D85, and N103.

Belongs to the class I-like SAM-binding methyltransferase superfamily. rRNA adenine N(6)-methyltransferase family. RsmA subfamily.

It is found in the cytoplasm. It catalyses the reaction adenosine(1518)/adenosine(1519) in 16S rRNA + 4 S-adenosyl-L-methionine = N(6)-dimethyladenosine(1518)/N(6)-dimethyladenosine(1519) in 16S rRNA + 4 S-adenosyl-L-homocysteine + 4 H(+). In terms of biological role, specifically dimethylates two adjacent adenosines (A1518 and A1519) in the loop of a conserved hairpin near the 3'-end of 16S rRNA in the 30S particle. May play a critical role in biogenesis of 30S subunits. The sequence is that of Ribosomal RNA small subunit methyltransferase A from Bordetella bronchiseptica (strain ATCC BAA-588 / NCTC 13252 / RB50) (Alcaligenes bronchisepticus).